The chain runs to 117 residues: MTANKTAKIQFYEGTDEPVVPEIRLTRSKDGTSGQALFQFEKPQALSSITDGEITGMRMIDAEGEILTREVKVKFVDGEPIFLEAVYIWKSTSDFDRFMRFANSYAKSNGLGYSEKK.

This sequence belongs to the Psb28 family. Part of the photosystem II complex.

The protein resides in the cellular thylakoid membrane. In Prochlorococcus marinus (strain MIT 9312), this protein is Photosystem II reaction center Psb28 protein.